Here is a 280-residue protein sequence, read N- to C-terminus: Thioredoxin-related transmembrane protein 1 (280 aa).

The signal sequence occupies residues 1–26 (MAPSGSLAVPLAVLVLLLWGAPWTHG). Residues 27–132 (RRSNVRVITD…FINFISDKEW (106 aa)) enclose the Thioredoxin domain. Residues 27-180 (RRSNVRVITD…EDLGLPVWGS (154 aa)) are Extracellular-facing. Catalysis depends on nucleophile residues Cys56 and Cys59. Cys56 and Cys59 are disulfide-bonded. A helical membrane pass occupies residues 181–203 (YTVFALATLFSGLLLGLCMIFVA). Over 204-280 (DCLCPSKRRR…LGPSLATDKS (77 aa)) the chain is Cytoplasmic. S-palmitoyl cysteine attachment occurs at residues Cys205 and Cys207. The interval 218–280 (PYPSKKLLSE…LGPSLATDKS (63 aa)) is disordered. Residues Ser228, Ser247, Ser270, Ser274, and Ser280 each carry the phosphoserine modification. The span at 237–252 (EEQEADEEDVSEEEAE) shows a compositional bias: acidic residues.

In terms of assembly, interacts with ATP2A2. Post-translationally, palmitoylated; palmitoylation is required for localization to mitochondria-associated endoplasmic reticulum membrane (MAM). In terms of tissue distribution, ubiquitous. Highly expressed in kidney, liver, placenta and lung.

The protein resides in the endoplasmic reticulum membrane. It localises to the mitochondrion membrane. The protein localises to the secreted. The catalysed reaction is Catalyzes the rearrangement of -S-S- bonds in proteins.. In terms of biological role, thiredoxin domain-containing protein that participates in various redox reactions through the reversible oxidation of its active center dithiol to a disulfide and catalyze dithiol-disulfide exchange reactions. Acts as a key inhibitor of the alternative triglyceride biosynthesis pathway by inhibiting the activity of TMEM68/DIESL at the endoplasmic reticulum, thereby restricting accumulation of triacylglycerol. The alternative triglyceride biosynthesis pathway mediates formation of triacylglycerol from diacylglycerol and membrane phospholipids. Acts as a protein disulfide isomerase by catalyzing formation or reduction of disulfide bonds. Specifically mediates formation of disulfide bonds of transmembrane proteins at the endoplasmic reticulum membrane. Involved in endoplasmic reticulum-associated degradation (ERAD) via its protein disulfide isomerase activity by acting on folding-defective polypeptides at the endoplasmic reticulum membrane. Acts as a negative regulator of platelet aggregation following secretion in the extracellular space. Acts as a regulator of endoplasmic reticulum-mitochondria contact sites via its ability to regulate redox signals. Regulates endoplasmic reticulum-mitochondria Ca(2+) flux. This chain is Thioredoxin-related transmembrane protein 1, found in Homo sapiens (Human).